The primary structure comprises 90 residues: Darcynin 1 (90 aa).

This sequence belongs to the darcynin family.

This chain is Darcynin 1, found in Acinetobacter baumannii (strain ATCC 17978 / DSM 105126 / CIP 53.77 / LMG 1025 / NCDC KC755 / 5377).